A 78-amino-acid polypeptide reads, in one-letter code: Large ribosomal subunit protein bL28 (78 aa).

A disordered region spans residues 1–20; the sequence is MSRVCQVTGKRPVTGNNRSH.

This sequence belongs to the bacterial ribosomal protein bL28 family.

This chain is Large ribosomal subunit protein bL28, found in Vibrio campbellii (strain ATCC BAA-1116).